The following is a 339-amino-acid chain: Methionine import ATP-binding protein MetN 1 (339 aa).

The ABC transporter domain maps to 2–241 (ISFNNVSKVY…PKTKTTQNFV (240 aa)). Residue 38 to 45 (GFSGAGKS) coordinates ATP.

Belongs to the ABC transporter superfamily. Methionine importer (TC 3.A.1.24) family. In terms of assembly, the complex is composed of two ATP-binding proteins (MetN), two transmembrane proteins (MetI) and a solute-binding protein (MetQ).

The protein localises to the cell membrane. The catalysed reaction is L-methionine(out) + ATP + H2O = L-methionine(in) + ADP + phosphate + H(+). It catalyses the reaction D-methionine(out) + ATP + H2O = D-methionine(in) + ADP + phosphate + H(+). Functionally, part of the ABC transporter complex MetNIQ involved in methionine import. Responsible for energy coupling to the transport system. The chain is Methionine import ATP-binding protein MetN 1 from Bacillus thuringiensis subsp. konkukian (strain 97-27).